The sequence spans 119 residues: V-type proton ATPase subunit F (119 aa).

The protein belongs to the V-ATPase F subunit family. In terms of assembly, V-ATPase is a heteromultimeric enzyme made up of two complexes: the ATP-hydrolytic V1 complex and the proton translocation V0 complex. The V1 complex consists of three catalytic AB heterodimers that form a heterohexamer, three peripheral stalks each consisting of EG heterodimers, one central rotor including subunits D and F, and the regulatory subunits C and H. The proton translocation complex V0 consists of the proton transport subunit a, a ring of proteolipid subunits c9c'', rotary subunit d, subunits e and f, and the accessory subunits ATP6AP1/Ac45 and ATP6AP2/PRR.

Its subcellular location is the cytoplasmic vesicle. The protein resides in the secretory vesicle. It is found in the synaptic vesicle membrane. The protein localises to the clathrin-coated vesicle membrane. Functionally, subunit of the V1 complex of vacuolar(H+)-ATPase (V-ATPase), a multisubunit enzyme composed of a peripheral complex (V1) that hydrolyzes ATP and a membrane integral complex (V0) that translocates protons. V-ATPase is responsible for acidifying and maintaining the pH of intracellular compartments and in some cell types, is targeted to the plasma membrane, where it is responsible for acidifying the extracellular environment. The sequence is that of V-type proton ATPase subunit F (Atp6v1f) from Mus musculus (Mouse).